Consider the following 238-residue polypeptide: 5-amino-6-(5-phospho-D-ribitylamino)uracil phosphatase YigB (238 aa).

Residue Asp16 is the Nucleophile of the active site. Positions 16, 18, and 188 each coordinate Mg(2+). 16–18 (DLD) lines the substrate pocket.

Belongs to the HAD-like hydrolase superfamily. The cofactor is Mg(2+). Mn(2+) is required as a cofactor. It depends on Co(2+) as a cofactor. Requires Zn(2+) as cofactor.

The enzyme catalyses 5-amino-6-(5-phospho-D-ribitylamino)uracil + H2O = 5-amino-6-(D-ribitylamino)uracil + phosphate. Its pathway is cofactor biosynthesis; riboflavin biosynthesis; 5-amino-6-(D-ribitylamino)uracil from GTP: step 4/4. In terms of biological role, catalyzes the dephosphorylation of 5-amino-6-(5-phospho-D-ribitylamino)uracil, and thus could be involved in the riboflavin biosynthesis pathway. Is also able to dephosphorylate flavin mononucleotide (FMN) and other phosphoric acid esters. YigB is important for the formation of dormant persister cells. The polypeptide is 5-amino-6-(5-phospho-D-ribitylamino)uracil phosphatase YigB (yigB) (Escherichia coli (strain K12)).